A 297-amino-acid polypeptide reads, in one-letter code: MSAKAAEGYEQIEVDVVAVWKEGYVYENRGSTSVDQKITITKGMKNVNSETRTVTATHSIGSTISTGDAFEIGSVEVSYSHSHEESQVSMTETEVYESKVIEHTITIPPTSKFTRWQLNADVGGADIEYMYLIDEVTPIGGTQSIPQVITSRAKIIVGRQIILGKTEIRIKHAERKEYMTVVSRKSWPAATLGHSKLFKFVLYEDWGGFRIKTLNTMYSGYEYAYSSDQGGIYFDQGTDNPKQRWAINKSLPLRHGDVVTFMNKYFTRSGLCYDDGPATNVYCLDKREDKWILEVVG.

The interval 10–33 is N-terminal cap domain; it reads EQIEVDVVAVWKEGYVYENRGSTS. A beta-hairpin domain region spans residues 34 to 107; that stretch reads VDQKITITKG…SKVIEHTITI (74 aa). Positions 108-156 are N-terminal cap domain; it reads PPTSKFTRWQLNADVGGADIEYMYLIDEVTPIGGTQSIPQVITSRAKII. Residues 157–297 are C-terminal receptor-binding domain; sequence VGRQIILGKT…EDKWILEVVG (141 aa). Residues lysine 185, serine 227, tyrosine 233, and tyrosine 282 each coordinate an N-(acyl)-sphingosylphosphocholine. Cysteines 272 and 283 form a disulfide.

The protein belongs to the lysenin family. As to quaternary structure, binds to sphingomyelin as a monomer by using its C-terminal domain. Forms a nonamer when sphingomyelin/lysenin ratio is lower than ca 500. Oligomerization, but not binding, is influenced by the fluidity of sphingomyelin. In terms of tissue distribution, expressed by coelomocytes.

It is found in the secreted. It localises to the target cell membrane. In terms of biological role, pore-forming toxin that defensively acts against parasitic microorganisms by forming pores in sphingomyelin-containing membranes. Has hemolytic activity and is also cytotoxic to spermatozoa of some species of invertebrates and many species of vertebrates and to amphibian larvae, guinea pig polymorphonuclear leukocytes, chicken fibroblasts, normal spleen cells and various tumor cells. Is lethal for various species of reptiles, amphibian, birds and mammals. Induces smooth muscle contraction. It binds sphingomyelin and induces hemolysis in the same manner as lysenin-related protein 2, and is 10-fold more effective than lysenin-related protein 1. The protein is Lysenin of Eisenia fetida (Red wiggler worm).